Here is a 149-residue protein sequence, read N- to C-terminus: Transthyretin (149 aa).

A signal peptide spans 1-20 (MAFHSLLLLCLAGLLFVSEA). At Cys32 the chain carries Sulfocysteine. An L-thyroxine-binding site is contributed by Lys37. Glu64 is subject to 4-carboxyglutamate. Residues Glu76 and Ser139 each contribute to the L-thyroxine site.

Belongs to the transthyretin family. In terms of assembly, homotetramer. Dimer of dimers. In the homotetramer, subunits assemble around a central channel that can accommodate two ligand molecules. Interacts with RBP4. Post-translationally, sulfonation of the reactive cysteine Cys-32 enhances the stability of the native conformation of TTR, avoiding misassembly of the protein leading to amyloid formation. Detected in plasma (at protein level). Detected in liver.

The protein resides in the secreted. Its function is as follows. Thyroid hormone-binding protein. Probably transports thyroxine from the bloodstream to the brain. The sequence is that of Transthyretin (TTR) from Petaurus breviceps (Australian sugar glider).